The chain runs to 214 residues: ATP phosphoribosyltransferase (214 aa).

Belongs to the ATP phosphoribosyltransferase family. Short subfamily. In terms of assembly, heteromultimer composed of HisG and HisZ subunits.

It localises to the cytoplasm. The catalysed reaction is 1-(5-phospho-beta-D-ribosyl)-ATP + diphosphate = 5-phospho-alpha-D-ribose 1-diphosphate + ATP. It participates in amino-acid biosynthesis; L-histidine biosynthesis; L-histidine from 5-phospho-alpha-D-ribose 1-diphosphate: step 1/9. Its function is as follows. Catalyzes the condensation of ATP and 5-phosphoribose 1-diphosphate to form N'-(5'-phosphoribosyl)-ATP (PR-ATP). Has a crucial role in the pathway because the rate of histidine biosynthesis seems to be controlled primarily by regulation of HisG enzymatic activity. The chain is ATP phosphoribosyltransferase from Streptococcus sanguinis (strain SK36).